Consider the following 351-residue polypeptide: tRNA-specific 2-thiouridylase MnmA (351 aa).

ATP is bound by residues 7–14 (GLSGGVDS) and leucine 33. The active-site Nucleophile is the cysteine 94. Cysteines 94 and 193 form a disulfide. Residue glycine 119 coordinates ATP. The tract at residues 143 to 145 (KDQ) is interaction with tRNA. Cysteine 193 (cysteine persulfide intermediate) is an active-site residue. Residues 298–299 (RY) form an interaction with tRNA region.

Belongs to the MnmA/TRMU family.

Its subcellular location is the cytoplasm. It carries out the reaction S-sulfanyl-L-cysteinyl-[protein] + uridine(34) in tRNA + AH2 + ATP = 2-thiouridine(34) in tRNA + L-cysteinyl-[protein] + A + AMP + diphosphate + H(+). Functionally, catalyzes the 2-thiolation of uridine at the wobble position (U34) of tRNA, leading to the formation of s(2)U34. The protein is tRNA-specific 2-thiouridylase MnmA of Nostoc punctiforme (strain ATCC 29133 / PCC 73102).